The following is a 170-amino-acid chain: E1B protein, small T-antigen (170 aa).

Belongs to the adenoviridae E1B 19 kDa protein family.

The protein is E1B protein, small T-antigen of Canine adenovirus serotype 2 (CAdV-2).